Reading from the N-terminus, the 1002-residue chain is yemanuclein (1002 aa).

A Nuclear localization signal motif is present at residues 80–85 (KKKTKK). 3 disordered regions span residues 193–358 (AIIK…KKVV), 395–428 (VSTD…GQEN), and 642–725 (KLKA…AKQV). The span at 207-217 (SSSSESSSSSS) shows a compositional bias: low complexity. Over residues 218–262 (GDDDENDDGNNEEDDESDSEDDSEENDESDSEDDSESESLEDEDS) the composition is skewed to acidic residues. 2 tandem repeats follow at residues 230–241 (EDDESDSEDDSE) and 242–253 (ENDESDSEDDSE). The interval 230-253 (EDDESDSEDDSEENDESDSEDDSE) is 2 X 12 AA tandem repeats. Low complexity-rich tracts occupy residues 286–320 (TGKS…RPST), 336–358 (QPSS…KKVV), and 395–404 (VSTDVSSSDS). The segment covering 408 to 427 (ESEHGRADRQAGQHGKDGQE) has biased composition (basic and acidic residues). Residues 653 to 667 (PASASPKPVGVVSAP) show a composition bias toward low complexity. Over residues 679–689 (AVEDPRSRGNS) the composition is skewed to basic and acidic residues. A phosphoserine mark is found at serine 685 and serine 689. Low complexity predominate over residues 690-701 (DTDSATSASSNS). A phosphoserine mark is found at serine 885, serine 886, and serine 887. The segment at 901 to 928 (SKPQKKVQSKPKNKTQNRGRSSLGAVGQ) is disordered. Residues 903–917 (PQKKVQSKPKNKTQN) show a composition bias toward basic residues.

In terms of processing, the N-terminus is blocked. As to expression, oocyte specific.

Its subcellular location is the nucleus. It localises to the nucleoplasm. The protein localises to the chromosome. The protein resides in the centromere. It is found in the kinetochore. May play a key role in egg organization. May be a transcriptional regulator having a role in chromatin remodeling in concert with Hira, a histone chaperone. Involved in chromosome segregation by affecting kinetochores function in the first meiotic division. The polypeptide is yemanuclein (Drosophila melanogaster (Fruit fly)).